A 361-amino-acid polypeptide reads, in one-letter code: NAD-dependent protein deacetylase hst2-1 (361 aa).

The region spanning 16–276 (SVLEARTVEA…RKLARALGWE (261 aa)) is the Deacetylase sirtuin-type domain. NAD(+)-binding positions include 43–63 (GAGI…TGIY) and 126–129 (QNID). H146 acts as the Proton acceptor in catalysis. The Zn(2+) site is built by C154, C157, C178, and C181. NAD(+) contacts are provided by residues 217–219 (GTS), 242–244 (NRE), and C262. Residues 294–328 (EEELATPRTREERLENEISRLTAEIDKTLKISDAY) adopt a coiled-coil conformation. The tract at residues 335–361 (RLEGEPLSSPESNGTGLAHVFPHLARR) is disordered.

Belongs to the sirtuin family. Class I subfamily. It depends on Zn(2+) as a cofactor.

It is found in the cytoplasm. Its subcellular location is the nucleus. The enzyme catalyses N(6)-acetyl-L-lysyl-[protein] + NAD(+) + H2O = 2''-O-acetyl-ADP-D-ribose + nicotinamide + L-lysyl-[protein]. In terms of biological role, NAD-dependent histone deacetylase, which could function in telomeric silencing, cell cycle progression and chromosome stability. The protein is NAD-dependent protein deacetylase hst2-1 of Emericella nidulans (strain FGSC A4 / ATCC 38163 / CBS 112.46 / NRRL 194 / M139) (Aspergillus nidulans).